We begin with the raw amino-acid sequence, 568 residues long: Small ribosomal subunit protein bS1 (568 aa).

S1 motif domains follow at residues 27–93 (GYVA…LSRE), 111–177 (GERV…VSRR), 198–266 (GQVV…LGMK), 283–353 (GKKI…LGLK), 370–440 (GTEV…LGIK), and 459–530 (NAVV…LSIK).

This sequence belongs to the bacterial ribosomal protein bS1 family.

Its function is as follows. Binds mRNA; thus facilitating recognition of the initiation point. It is needed to translate mRNA with a short Shine-Dalgarno (SD) purine-rich sequence. This chain is Small ribosomal subunit protein bS1 (rpsA), found in Rhizobium meliloti (strain 1021) (Ensifer meliloti).